The primary structure comprises 395 residues: MVMAGASSLDEIRQAQRADGPAGILAIGTANPENHVLQAEYPDYYFRITNSEHMTDLKEKFKRMCDKSTIRKRHMHLTEEFLKENPHMCAYMAPSLDTRQDIVVVEVPKLGKEAAVKAIKEWGQPKSKITHVVFCTTSGVDMPGADYQLTKLLGLRPSVKRLMMYQQGCFAGGTVLRIAKDLAENNRGARVLVVCSEITAVTFRGPSDTHLDSLVGQALFSDGAAALIVGSDPDTSVGEKPIFEMVSAAQTILPDSDGAIDGHLREVGLTFHLLKDVPGLISKNIVKSLDEAFKPLGISDWNSLFWIAHPGGPAILDQVEIKLGLKEEKMRATRHVLSEYGNMSSACVLFILDEMRRKSAKDGVATTGEGLEWGVLFGFGPGLTVETVVLHSVPL.

The residue at position 2 (valine 2) is an N-acetylvaline. An N-acetylalanine modification is found at valine 2. The active site involves cysteine 169.

The protein belongs to the thiolase-like superfamily. Chalcone/stilbene synthases family.

The enzyme catalyses (E)-4-coumaroyl-CoA + 3 malonyl-CoA + 3 H(+) = 2',4,4',6'-tetrahydroxychalcone + 3 CO2 + 4 CoA. It functions in the pathway secondary metabolite biosynthesis; flavonoid biosynthesis. Functionally, the primary product of this enzyme is 4,2',4',6'-tetrahydroxychalcone (also termed naringenin-chalcone or chalcone) which can under specific conditions spontaneously isomerize into naringenin. In Arabidopsis thaliana (Mouse-ear cress), this protein is Chalcone synthase (CHS).